Here is a 392-residue protein sequence, read N- to C-terminus: Succinate--CoA ligase [ADP-forming] subunit beta (392 aa).

The ATP-grasp domain occupies Lys-9–Glu-248. Residues Lys-50, Gly-57–Gly-59, Glu-103, Met-106, and Glu-111 contribute to the ATP site. Mg(2+)-binding residues include Asn-203 and Asp-217. Substrate contacts are provided by residues Asn-268 and Gly-325–Val-327.

The protein belongs to the succinate/malate CoA ligase beta subunit family. As to quaternary structure, heterotetramer of two alpha and two beta subunits. It depends on Mg(2+) as a cofactor.

It carries out the reaction succinate + ATP + CoA = succinyl-CoA + ADP + phosphate. The enzyme catalyses GTP + succinate + CoA = succinyl-CoA + GDP + phosphate. The protein operates within carbohydrate metabolism; tricarboxylic acid cycle; succinate from succinyl-CoA (ligase route): step 1/1. Functionally, succinyl-CoA synthetase functions in the citric acid cycle (TCA), coupling the hydrolysis of succinyl-CoA to the synthesis of either ATP or GTP and thus represents the only step of substrate-level phosphorylation in the TCA. The beta subunit provides nucleotide specificity of the enzyme and binds the substrate succinate, while the binding sites for coenzyme A and phosphate are found in the alpha subunit. This is Succinate--CoA ligase [ADP-forming] subunit beta from Chlorobaculum tepidum (strain ATCC 49652 / DSM 12025 / NBRC 103806 / TLS) (Chlorobium tepidum).